A 173-amino-acid chain; its full sequence is MARVEL domain-containing protein 1 (173 aa).

An N-acetylmethionine modification is found at Met1. Topologically, residues 1–29 (MLPPPPRQPPPQARAARGAVRLQRPFLRS) are cytoplasmic. Positions 26–166 (FLRSPLGVLR…SALYGCGRRC (141 aa)) constitute an MARVEL domain. A helical membrane pass occupies residues 30-50 (PLGVLRLLQLLAGAAFWITIA). Residues 51 to 59 (TSKYQGPVH) lie on the Extracellular side of the membrane. Residues 60–80 (FALFVSVLFWLLTLGLYFLTL) form a helical membrane-spanning segment. Topologically, residues 81–94 (LGKHELVPVLGSRW) are cytoplasmic. The chain crosses the membrane as a helical span at residues 95–115 (LMVNVAHDVLAAALYGAATGI). The Extracellular portion of the chain corresponds to 116–138 (MSDQMQRHSYCNLKDYPLPCAYH). Residues 139 to 159 (AFLAAAVCGGVCHGLYLLSAL) traverse the membrane as a helical segment. Residues 160-173 (YGCGRRCQGKQEVA) lie on the Cytoplasmic side of the membrane.

In terms of tissue distribution, widely expressed in normal tissues. Down-regulated in multiple primary tumors.

Its subcellular location is the cell membrane. The protein resides in the cytoplasm. The protein localises to the cytoskeleton. It localises to the nucleus. In terms of biological role, microtubule-associated protein that exhibits cell cycle-dependent localization and can inhibit cell proliferation and migration. The protein is MARVEL domain-containing protein 1 (MARVELD1) of Homo sapiens (Human).